Here is a 56-residue protein sequence, read N- to C-terminus: uncharacterized protein (56 aa).

A disordered region spans residues 15–56 (SIGNISSGNINNSIGNSSSSGCDDVFNNSTNNNNNNNNNNNK).

This is an uncharacterized protein from Dictyostelium discoideum (Social amoeba).